Reading from the N-terminus, the 207-residue chain is Cytochrome c biogenesis ATP-binding export protein CcmA (207 aa).

The ABC transporter domain maps to Leu4–Ala207. Gly36–Thr43 contributes to the ATP binding site.

This sequence belongs to the ABC transporter superfamily. CcmA exporter (TC 3.A.1.107) family. In terms of assembly, the complex is composed of two ATP-binding proteins (CcmA) and two transmembrane proteins (CcmB).

It localises to the cell inner membrane. It catalyses the reaction heme b(in) + ATP + H2O = heme b(out) + ADP + phosphate + H(+). Part of the ABC transporter complex CcmAB involved in the biogenesis of c-type cytochromes; once thought to export heme, this seems not to be the case, but its exact role is uncertain. Responsible for energy coupling to the transport system. The sequence is that of Cytochrome c biogenesis ATP-binding export protein CcmA from Shigella boydii serotype 4 (strain Sb227).